The chain runs to 87 residues: Small ribosomal subunit protein uS17 (87 aa).

This sequence belongs to the universal ribosomal protein uS17 family. In terms of assembly, part of the 30S ribosomal subunit.

In terms of biological role, one of the primary rRNA binding proteins, it binds specifically to the 5'-end of 16S ribosomal RNA. In Cytophaga hutchinsonii (strain ATCC 33406 / DSM 1761 / CIP 103989 / NBRC 15051 / NCIMB 9469 / D465), this protein is Small ribosomal subunit protein uS17.